We begin with the raw amino-acid sequence, 55 residues long: Conotoxin Cal6.40 (55 aa).

A signal peptide spans 1–21 (MSGSGVLLLTLLLLVPLSALA). Intrachain disulfides connect Cys24/Cys36, Cys29/Cys41, and Cys35/Cys50.

In terms of tissue distribution, expressed by the venom duct.

It localises to the secreted. Its function is as follows. Probable neurotoxin. This chain is Conotoxin Cal6.40, found in Californiconus californicus (California cone).